The sequence spans 140 residues: Respiratory supercomplex factor 1, mitochondrial (140 aa).

Residues 1-79 (MNTLQKIAYR…KESAEQKQTR (79 aa)) enclose the HIG1 domain. The next 2 membrane-spanning stretches (helical) occupy residues 16-32 (LVPL…VLAA) and 46-68 (YFRY…GMYY). The stretch at 68–126 (YQKESAEQKQTREDKLREKAKLREQLWIEELERRDQLIKARKQRLEESKKELMKVAQEG) forms a coiled coil.

It belongs to the RCF1 family. As to quaternary structure, associates with the respiratory chain complex III/complex IV supercomplex.

It is found in the mitochondrion membrane. Functionally, cytochrome c oxidase subunit which plays a role in assembly of respiratory supercomplexes. In Clavispora lusitaniae (strain ATCC 42720) (Yeast), this protein is Respiratory supercomplex factor 1, mitochondrial (RCF1).